The sequence spans 119 residues: Large ribosomal subunit protein uL24 (119 aa).

The protein belongs to the universal ribosomal protein uL24 family. In terms of assembly, part of the 50S ribosomal subunit.

Functionally, one of two assembly initiator proteins, it binds directly to the 5'-end of the 23S rRNA, where it nucleates assembly of the 50S subunit. Located at the polypeptide exit tunnel on the outside of the subunit. The polypeptide is Large ribosomal subunit protein uL24 (Methanococcus maripaludis (strain DSM 14266 / JCM 13030 / NBRC 101832 / S2 / LL)).